The following is an 815-amino-acid chain: uncharacterized protein (815 aa).

The signal sequence occupies residues 1–21 (MNIYRLSFVSCLVMAMPCAMA). Cysteines 795 and 814 form a disulfide.

Belongs to the fimbrial export usher family.

The protein localises to the cell outer membrane. Could be involved in the export and assembly of the putative YbgD fimbrial subunit across the outer membrane. This is an uncharacterized protein from Escherichia coli (strain K12).